The sequence spans 146 residues: Fluoride-specific ion channel FluC (146 aa).

Helical transmembrane passes span 8 to 28 (FAIA…TLTV), 47 to 67 (LANL…QALV), 91 to 111 (IGVL…AVFA), and 121 to 141 (MLLG…AAVV). Na(+)-binding residues include glycine 95 and threonine 98.

This sequence belongs to the fluoride channel Fluc/FEX (TC 1.A.43) family.

Its subcellular location is the cell inner membrane. It catalyses the reaction fluoride(in) = fluoride(out). With respect to regulation, na(+) is not transported, but it plays an essential structural role and its presence is essential for fluoride channel function. Its function is as follows. Fluoride-specific ion channel. Important for reducing fluoride concentration in the cell, thus reducing its toxicity. The protein is Fluoride-specific ion channel FluC of Rhodopirellula baltica (strain DSM 10527 / NCIMB 13988 / SH1).